Here is a 390-residue protein sequence, read N- to C-terminus: Immunoglobulin mu Fc receptor (390 aa).

Residues 1–16 (MDFWLWPLYFLPVSGA) form the signal peptide. Over 17-251 (LRILPEVKVE…GSQSGREGQG (235 aa)) the chain is Extracellular. The Ig-like domain occupies 23–123 (VKVEGELGGS…KTQKVTLNVH (101 aa)). Residues 33–115 (VTIKCPLPEM…AGMNTDRGKT (83 aa)) are CDR4. Cystine bridges form between Cys-37–Cys-104 and Cys-49–Cys-58. Residues 40–45 (PEMHVR) are CDR1. Positions 59 to 70 (GTVVSTTNFIKA) are CDR2. Thr-92 is subject to Phosphothreonine. Positions 106–115 (AGMNTDRGKT) are CDR3. Residues 166–204 (PAQRGKVPPVHHSSPTTQITHRPRVSRASSVAGDKPRTF) are disordered. A helical transmembrane segment spans residues 252–272 (FHILIPTILGLFLLALLGLVV). Residues 273–390 (KRAVERRKAL…DSDDYINVPA (118 aa)) lie on the Cytoplasmic side of the membrane. 2 stretches are compositionally biased toward low complexity: residues 293–311 (MRAL…PRSQ) and 325–334 (ADAAGTGEAP). The segment at 293-348 (MRALESSQRPRGSPRPRSQNNIYSACPRRARGADAAGTGEAPVPGPGAPLPPAPLQ) is disordered. Over residues 335 to 346 (VPGPGAPLPPAP) the composition is skewed to pro residues.

Interacts (via Ig-like domain) with IGHM (via CH4/Cmu4 domain), both secreted and membrane-bound IgM; the interaction is glycan-independent and multivalent theoretically involving up to eight binding sites for the IgM pentamer. In terms of processing, phosphorylated on both Tyr and Ser residues. Post-translationally, O-glycosylated. Sialylated. O-linked glycans regulate trafficking to the plasma membrane. In terms of tissue distribution, expressed by CD19-positive B cells and CD4-positive and CD8-positive T cell populations in primary and secondary lymphoid tissues (at protein level). Among B cell subsets, detected in a subset of bone marrow pro- and pre-B cells, in most follicular and memory B cells and in a small subset of germinal center B cells (at protein level). Expressed at lower levels in CD56-positive NK cells (at protein level). Expressed in lymph nodes, lung, thymus and kidneys. Very weak expression detected in spleen, liver, heart, and salivary gland.

It is found in the cell membrane. The protein resides in the early endosome membrane. Its subcellular location is the golgi apparatus. The protein localises to the trans-Golgi network membrane. It localises to the lysosome membrane. It is found in the secreted. High-affinity Fc receptor for immunoglobulin M (IgM), both secreted and membrane-bound IgM. Primarily regulates IgM transport and homeostasis. In lymphoid cells, enables exocytosis of membrane-bound IgM on the plasma membrane as well as endocytosis of IgM-antigen complexes toward lysosomes for degradation. In mucosal epithelium, mediates retrotranscytosis of antigen-IgM complexes across mucosal M cells toward antigen-presenting cells in mucosal lymphoid tissues. Triggers costimulatory signaling and mediates most of IgM effector functions involved in B cell development and primary immune response to infection. Likely limits tonic IgM BCR signaling to self-antigens for proper negative selection of autoreactive B cells in the bone marrow and for the maintenance of regulatory B cell pool in peripheral lymphoid organs. Mediates antibody responses to T cell-dependent and T cell-independent antigens and promotes induction of an efficient neutralizing IgG response. Engages in cross-talk with antigen-receptor signaling via the non-canonical NF-kappa-B, MAP kinases and calcium signaling pathways. This is Immunoglobulin mu Fc receptor from Homo sapiens (Human).